A 399-amino-acid polypeptide reads, in one-letter code: Peroxisome assembly protein 12 (399 aa).

Positions 1 to 24 (MSFYSNLPSAGQSSRGSSTSGRNG) are disordered. At 1-33 (MSFYSNLPSAGQSSRGSSTSGRNGVGLEPLYPT) the chain is on the peroxisomal matrix side. Low complexity predominate over residues 9–24 (SAGQSSRGSSTSGRNG). The helical transmembrane segment at 34–62 (IFEIMSSQEIDSLLPASIRYLLANHLVAN) threads the bilayer. The Cytoplasmic segment spans residues 63 to 67 (FPNRY). A helical membrane pass occupies residues 68 to 92 (TLRLNKYFFEWFQAIKGFVEWYHLK). The Peroxisomal matrix segment spans residues 93-136 (TYNSTFIDRFYGLQLFSSRDRNLALTQCLNPKGQSEWPQGLQLN). Residues 137-168 (QQQKSVIFLEKIILPYITAKLDEILEKISMNN) traverse the membrane as a helical segment. Residues 169-171 (IFS) are Cytoplasmic-facing. A helical membrane pass occupies residues 172–208 (SDETENKWPKRAFLRIYPFIKKLLALSNLLVKLLFLT). At 209 to 277 (KRTGSVSLLQ…PRFLTFMGSQ (69 aa)) the chain is on the peroxisomal matrix side. The chain crosses the membrane as a helical span at residues 278 to 305 (FFPTFIFVLRVYQWWTTQDMTTKLQKRV). The Cytoplasmic segment spans residues 306–399 (NDLDEDIPRP…VVTGIRKLLI (94 aa)). Zn(2+) contacts are provided by C334, C337, C354, and C357. Residues 334-373 (CPVCEKTVQNPCVLETGYVACYPCAISYLVNNEGHCPVTN) form an RING-type; degenerate zinc finger.

The protein belongs to the pex2/pex10/pex12 family. In terms of assembly, component of the PEX2-PEX10-PEX12 retrotranslocation channel, composed of PEX2, PEX10 and PEX12.

It is found in the peroxisome membrane. The protein operates within protein modification; protein ubiquitination. Functionally, component of a retrotranslocation channel required for peroxisome organization by mediating export of the PEX5 receptor from peroxisomes to the cytosol, thereby promoting PEX5 recycling. The retrotranslocation channel is composed of PEX2, PEX10 and PEX12; each subunit contributing transmembrane segments that coassemble into an open channel that specifically allows the passage of PEX5 through the peroxisomal membrane. PEX12 also regulates PEX5 recycling by activating the E3 ubiquitin-protein ligase activity of PEX10. When PEX5 recycling is compromised, PEX12 stimulates PEX10-mediated polyubiquitination of PEX5, leading to its subsequent degradation. The sequence is that of Peroxisome assembly protein 12 from Saccharomyces cerevisiae (strain ATCC 204508 / S288c) (Baker's yeast).